A 361-amino-acid chain; its full sequence is Lipoyl synthase 1, chloroplastic (361 aa).

The [4Fe-4S] cluster site is built by Cys-87, Cys-92, Cys-98, Cys-124, Cys-128, Cys-131, and Ser-339. The 222-residue stretch at 107 to 328 (GEGDGIATAT…KEYGESVGFR (222 aa)) folds into the Radical SAM core domain.

The protein belongs to the radical SAM superfamily. Lipoyl synthase family. It depends on [4Fe-4S] cluster as a cofactor.

It is found in the plastid. It localises to the chloroplast. It carries out the reaction [[Fe-S] cluster scaffold protein carrying a second [4Fe-4S](2+) cluster] + N(6)-octanoyl-L-lysyl-[protein] + 2 oxidized [2Fe-2S]-[ferredoxin] + 2 S-adenosyl-L-methionine + 4 H(+) = [[Fe-S] cluster scaffold protein] + N(6)-[(R)-dihydrolipoyl]-L-lysyl-[protein] + 4 Fe(3+) + 2 hydrogen sulfide + 2 5'-deoxyadenosine + 2 L-methionine + 2 reduced [2Fe-2S]-[ferredoxin]. Its pathway is protein modification; protein lipoylation via endogenous pathway; protein N(6)-(lipoyl)lysine from octanoyl-[acyl-carrier-protein]: step 2/2. Functionally, catalyzes the radical-mediated insertion of two sulfur atoms into the C-6 and C-8 positions of the octanoyl moiety bound to the lipoyl domains of lipoate-dependent enzymes, thereby converting the octanoylated domains into lipoylated derivatives. The protein is Lipoyl synthase 1, chloroplastic of Zea mays (Maize).